We begin with the raw amino-acid sequence, 1373 residues long: Poly(A) RNA polymerase gld-2 homolog B (1373 aa).

The segment covering 75–91 (NSCHSSNSSSNTSNNNN) has biased composition (low complexity). Disordered regions lie at residues 75 to 155 (NSCH…QEKQ), 175 to 340 (SDCK…FWKT), 425 to 543 (PDST…QQQK), 734 to 770 (PQQQ…FADG), 802 to 866 (CGSG…ALGS), and 880 to 928 (HPLH…PTPV). A compositionally biased stretch (polar residues) spans 96-112 (GQQQQPLHYCNSNNSHS). Low complexity-rich tracts occupy residues 130–152 (QQQQ…QMQQ), 180–219 (SDSN…SCSN), 228–251 (NENS…NTSS), and 274–284 (ESGSSEGAAES). Polar residues-rich tracts occupy residues 295–340 (CNSN…FWKT) and 430–442 (KSSS…NMIR). Residues 443–485 (SSSNGNSNFSRHQYGHQSTGSGYQQQQQRYRNAQNVYQQYQHQ) are compositionally biased toward low complexity. Residues 486-502 (QQHHAQQHTHPHFRRKH) show a composition bias toward basic residues. Composition is skewed to low complexity over residues 735–753 (QQQQ…GTSS) and 819–844 (AGAL…SGTS). Residues 855–866 (PSISPTPSALGS) are compositionally biased toward polar residues. The segment covering 880 to 890 (HPLHQQHPPSH) has biased composition (low complexity). Positions 945 to 1373 (RYLAQARNIE…FAETTAAHVA (429 aa)) are sufficent for interaction with Dcr-2. Mg(2+) contacts are provided by Asp-1029 and Asp-1031. The 62-residue stretch at 1211 to 1272 (TLGEHLLGFF…NIEEPFDLSN (62 aa)) folds into the PAP-associated domain. Over residues 1320-1341 (LQQHQQQFEQQLHHPISGQQRS) the composition is skewed to low complexity. The tract at residues 1320–1359 (LQQHQQQFEQQLHHPISGQQRSAGGGGDGANPVPSTLNPD) is disordered.

This sequence belongs to the DNA polymerase type-B-like family. GLD2 subfamily. As to quaternary structure, interacts with orb, an RNA-binding protein, generating an ovarian cytoplasmic polyadenylation complex. Interacts (via C-terminus) with Dcr-2. The cofactor is Mg(2+). Mn(2+) serves as cofactor. As to expression, expressed in ovaries. Not expressed in adult males.

It localises to the cytoplasm. The enzyme catalyses RNA(n) + ATP = RNA(n)-3'-adenine ribonucleotide + diphosphate. Cytoplasmic poly(A) RNA polymerase that adds successive AMP monomers to the 3'-end of specific maternal RNAs (bcd, Tl, and tor), forming a poly(A) tail, during late oogenesis and early embryogenesis. In contrast to the canonical nuclear poly(A) RNA polymerase, it only adds poly(A) to selected cytoplasmic mRNAs. Required for localization of mRNAs to both poles of the egg, to recruit or maintain known centrosomal proteins with two types of microtubule organizing centers (MTOCs): the central MTOC that forms between the meiosis II tandem spindles and the centrosomes of the mitotic spindle. Required at the final stage of oogenesis for meiosis I metaphase arrest and for progression beyond this stage. Functions with the RNA-binding protein Dcr-2 to promote cytoplasmic polyadenylation and translational activation of certain mRNAs such as Tl and r2d2. As a consequence, is involved in regulating Toll immune signaling and promoting resistance to fungal infection. The polypeptide is Poly(A) RNA polymerase gld-2 homolog B (wisp) (Drosophila melanogaster (Fruit fly)).